We begin with the raw amino-acid sequence, 459 residues long: Glycosyl hydrolase family 109 protein 1 (459 aa).

Positions 1–31 form a signal peptide, tat-type signal; it reads MHNIHRRHFLKAAGAVTAGLVTANIALNANA. Residues 64 to 65, Asp86, 135 to 138, 155 to 156, and Asn184 contribute to the NAD(+) site; these read ER, WEWH, and EV. Residues Tyr213, Arg232, 244-247, and Tyr326 contribute to the substrate site; that span reads YPTH. Tyr244 lines the NAD(+) pocket.

Belongs to the Gfo/Idh/MocA family. Glycosyl hydrolase 109 subfamily. It depends on NAD(+) as a cofactor. Predicted to be exported by the Tat system. The position of the signal peptide cleavage has not been experimentally proven.

In terms of biological role, glycosidase. This is Glycosyl hydrolase family 109 protein 1 from Shewanella sp. (strain ANA-3).